Here is a 335-residue protein sequence, read N- to C-terminus: Adenosine deaminase (335 aa).

Residues His12 and His14 each contribute to the Zn(2+) site. Substrate contacts are provided by His14 and Asp16. His197 is a Zn(2+) binding site. Glu200 acts as the Proton donor in catalysis. Asp278 is a binding site for Zn(2+).

The protein belongs to the metallo-dependent hydrolases superfamily. Adenosine and AMP deaminases family. Adenosine deaminase subfamily. Zn(2+) serves as cofactor.

The catalysed reaction is adenosine + H2O + H(+) = inosine + NH4(+). It catalyses the reaction 2'-deoxyadenosine + H2O + H(+) = 2'-deoxyinosine + NH4(+). Functionally, catalyzes the hydrolytic deamination of adenosine and 2-deoxyadenosine. The polypeptide is Adenosine deaminase (Clostridium botulinum (strain Kyoto / Type A2)).